We begin with the raw amino-acid sequence, 481 residues long: UDP-N-acetylmuramoyl-L-alanyl-D-glutamate--L-lysine ligase (481 aa).

Serine 42 contributes to the UDP-N-acetyl-alpha-D-muramoyl-L-alanyl-D-glutamate binding site. 118–124 is an ATP binding site; sequence GTKGKTT. UDP-N-acetyl-alpha-D-muramoyl-L-alanyl-D-glutamate is bound by residues glutamine 158, 160–161, serine 187, and arginine 195; that span reads TT. Lysine 229 carries the N6-carboxylysine modification. Residues 404-407 carry the L-lysine recognition motif motif; that stretch reads DDPN.

This sequence belongs to the MurCDEF family. MurE subfamily. Carboxylation is probably crucial for Mg(2+) binding and, consequently, for the gamma-phosphate positioning of ATP.

Its subcellular location is the cytoplasm. The catalysed reaction is UDP-N-acetyl-alpha-D-muramoyl-L-alanyl-D-glutamate + L-lysine + ATP = UDP-N-acetyl-alpha-D-muramoyl-L-alanyl-gamma-D-glutamyl-L-lysine + ADP + phosphate + H(+). It participates in cell wall biogenesis; peptidoglycan biosynthesis. In terms of biological role, catalyzes the addition of L-lysine to the nucleotide precursor UDP-N-acetylmuramoyl-L-alanyl-D-glutamate (UMAG) in the biosynthesis of bacterial cell-wall peptidoglycan. This is UDP-N-acetylmuramoyl-L-alanyl-D-glutamate--L-lysine ligase from Streptococcus pyogenes serotype M18 (strain MGAS8232).